The chain runs to 160 residues: Transcription elongation factor GreA (160 aa).

Belongs to the GreA/GreB family.

In terms of biological role, necessary for efficient RNA polymerase transcription elongation past template-encoded arresting sites. The arresting sites in DNA have the property of trapping a certain fraction of elongating RNA polymerases that pass through, resulting in locked ternary complexes. Cleavage of the nascent transcript by cleavage factors such as GreA or GreB allows the resumption of elongation from the new 3'terminus. GreA releases sequences of 2 to 3 nucleotides. This is Transcription elongation factor GreA from Leuconostoc citreum (strain KM20).